The sequence spans 224 residues: Claudin-19 (224 aa).

The Cytoplasmic portion of the chain corresponds to 1-7 (MANSGLQ). The helical transmembrane segment at 8-28 (LLGYFLALGGWVGIIASTALP) threads the bilayer. Over 29-81 (QWKQSSYAGDAIITAVGLYEGLWMSCASQSTGQVQCKLYDSLLALDGHIQSAR) the chain is Extracellular. C54 and C64 are joined by a disulfide. The helical transmembrane segment at 82–102 (ALMVVAVLLGFVAMVLSVVGM) threads the bilayer. Over 103–117 (KCTRVGDSNPTAKSR) the chain is Cytoplasmic. The chain crosses the membrane as a helical span at residues 118 to 138 (VAISGGALFLLAGLCTLTAVS). Topologically, residues 139 to 160 (WYATLVTQEFFNPSTPVNARYE) are extracellular. The chain crosses the membrane as a helical span at residues 161–181 (FGPALFVGWASAGLAMLGGSF). Residues 182–224 (LCCTCPEPERANSIPQPYRSGPSTAAREPVVKLPASVKGPLGV) are Cytoplasmic-facing.

It belongs to the claudin family. Can form homo- and heteropolymeric tight junction strands. Interacts with other claudins including CLDN3, CLDN10, CLDN16 and CLDN18 with highest affinity for CLDN16. Interacts (via PDZ-binding motif TRV) with TJP1 (via PDZ domain). As to quaternary structure, (Microbial infection) Interacts (via both extracellular domains) with Clostridium perfringens enterotoxin CPE; the interaction disrupts claudin assembly in tight junctions. In terms of tissue distribution, expressed in the corticomedullary axis of the TAL, specifically in the cortex and the outer stripe of outer medulla (OSOM) zone (at protein level). Expressed in peripheral nervous system, in Schwan cells (at protein level).

Its subcellular location is the cell junction. The protein localises to the tight junction. It is found in the cell membrane. It catalyses the reaction Mg(2+)(in) = Mg(2+)(out). It carries out the reaction Ca(2+)(in) = Ca(2+)(out). The enzyme catalyses Na(+)(in) = Na(+)(out). The catalysed reaction is K(+)(in) = K(+)(out). It catalyses the reaction Rb(+)(in) = Rb(+)(out). It carries out the reaction Cs(+)(in) = Cs(+)(out). The enzyme catalyses Li(+)(in) = Li(+)(out). Its function is as follows. Forms paracellular channels: coassembles with CLDN16 into tight junction strands with cation-selective channels through the strands, conveying epithelial permeability in a process known as paracellular tight junction permeability. Involved in the maintenance of ion gradients along the nephron. In the thick ascending limb (TAL) of Henle's loop, facilitates sodium paracellular permeability from the interstitial compartment to the lumen, contributing to the lumen-positive transepithelial potential that drives paracellular magnesium and calcium reabsorption. Forms paracellular barriers on its own. In the peripheral nervous system, represents a major constituent of the tight junctions in Schwann cells and contributes to electrical sealing. During retinal neurogenesis, may regulate the barrier properties of tight junctions in retinal pigment epithelium, required for proper retinal tissue differentiation and vision. The chain is Claudin-19 from Mus musculus (Mouse).